The following is a 963-amino-acid chain: VPS35 endosomal protein-sorting factor-like (963 aa).

Residues 43–69 (SKTKKVNRKGSTSSTSSSSSSSVVDPL) form a disordered region. Over residues 53-69 (STSSTSSSSSSSVVDPL) the composition is skewed to low complexity. Residue S265 is modified to Phosphoserine. A helical membrane pass occupies residues 703 to 719 (ACVAYCFITIPSLAGIF).

The protein belongs to the VPS35L family. In terms of assembly, component of the heterotrimeric retriever complex formed by VPS26C, VPS29 and VPS35L. Interacts with VPS29. Interacts with COMMD1, CCDC93 and CCDC22; associates with the CCC (COMMD/CCDC22/CCDC93) complex which contains at least COMMD1 (and possibly other COMM domain-containing proteins), CCDC22 and CCDC93. Interacts with WASHC1, WASHC2A and WASHC2C. Interacts with SNX17 and SNX31.

It is found in the membrane. Its subcellular location is the endosome. Functionally, acts as a component of the retriever complex. The retriever complex is a heterotrimeric complex related to retromer cargo-selective complex (CSC) and essential for retromer-independent retrieval and recycling of numerous cargos such as integrin alpha-5/beta-1 (ITGA5:ITGB1). The recruitment of the retriever complex to the endosomal membrane involves CCC and WASH complexes. In the endosomes, drives the retrieval and recycling of NxxY-motif-containing cargo proteins by coupling to SNX17, a cargo essential for the homeostatic maintenance of numerous cell surface proteins associated with processes that include cell migration, cell adhesion, nutrient supply and cell signaling. Involved in copper-dependent ATP7A trafficking between the trans-Golgi network and vesicles in the cell periphery; the function is proposed to depend on its association with the CCC complex and cooperation with the WASH complex on early endosomes. Seems not to be required for CCC complex stability. In terms of biological role, (Microbial infection) The heterotrimeric retriever complex, in collaboration with the CCC complex, mediates the exit of human papillomavirus to the cell surface. In Homo sapiens (Human), this protein is VPS35 endosomal protein-sorting factor-like.